Here is a 286-residue protein sequence, read N- to C-terminus: Bifunctional protein FolD (286 aa).

NADP(+) is bound by residues 165-167 (GRS) and serine 190.

The protein belongs to the tetrahydrofolate dehydrogenase/cyclohydrolase family. Homodimer.

It catalyses the reaction (6R)-5,10-methylene-5,6,7,8-tetrahydrofolate + NADP(+) = (6R)-5,10-methenyltetrahydrofolate + NADPH. The catalysed reaction is (6R)-5,10-methenyltetrahydrofolate + H2O = (6R)-10-formyltetrahydrofolate + H(+). Its pathway is one-carbon metabolism; tetrahydrofolate interconversion. Functionally, catalyzes the oxidation of 5,10-methylenetetrahydrofolate to 5,10-methenyltetrahydrofolate and then the hydrolysis of 5,10-methenyltetrahydrofolate to 10-formyltetrahydrofolate. This chain is Bifunctional protein FolD, found in Staphylococcus epidermidis (strain ATCC 12228 / FDA PCI 1200).